A 757-amino-acid polypeptide reads, in one-letter code: 5-methyltetrahydropteroyltriglutamate--homocysteine methyltransferase (757 aa).

5-methyltetrahydropteroyltri-L-glutamate is bound by residues 16–19 (RELK) and Lys112. L-homocysteine-binding positions include 433–435 (IGS) and Glu486. L-methionine contacts are provided by residues 433-435 (IGS) and Glu486. 5-methyltetrahydropteroyltri-L-glutamate-binding positions include 517-518 (RC) and Trp563. Asp601 is a binding site for L-homocysteine. An L-methionine-binding site is contributed by Asp601. 5-methyltetrahydropteroyltri-L-glutamate is bound at residue Glu607. The Zn(2+) site is built by His643, Cys645, and Glu667. His696 acts as the Proton donor in catalysis. Cys728 lines the Zn(2+) pocket.

This sequence belongs to the vitamin-B12 independent methionine synthase family. Zn(2+) serves as cofactor.

It catalyses the reaction 5-methyltetrahydropteroyltri-L-glutamate + L-homocysteine = tetrahydropteroyltri-L-glutamate + L-methionine. The protein operates within amino-acid biosynthesis; L-methionine biosynthesis via de novo pathway; L-methionine from L-homocysteine (MetE route): step 1/1. Its function is as follows. Catalyzes the transfer of a methyl group from 5-methyltetrahydrofolate to homocysteine resulting in methionine formation. This is 5-methyltetrahydropteroyltriglutamate--homocysteine methyltransferase from Pasteurella multocida (strain Pm70).